We begin with the raw amino-acid sequence, 142 residues long: Holo-[acyl-carrier-protein] synthase (142 aa).

2 residues coordinate Mg(2+): D8 and E57.

This sequence belongs to the P-Pant transferase superfamily. AcpS family. Requires Mg(2+) as cofactor.

The protein localises to the cytoplasm. It catalyses the reaction apo-[ACP] + CoA = holo-[ACP] + adenosine 3',5'-bisphosphate + H(+). Functionally, transfers the 4'-phosphopantetheine moiety from coenzyme A to a Ser of acyl-carrier-protein. The sequence is that of Holo-[acyl-carrier-protein] synthase from Maricaulis maris (strain MCS10) (Caulobacter maris).